A 274-amino-acid polypeptide reads, in one-letter code: Protein FAM210A (274 aa).

Residues 51 to 66 (KWLHSQPKQQDSSTKT) show a composition bias toward polar residues. Residues 51–91 (KWLHSQPKQQDSSTKTPVHDLPSGSQHQSEESSPSAKSSIS) are disordered. The segment covering 81–91 (ESSPSAKSSIS) has biased composition (low complexity). In terms of domain architecture, DUF1279 spans 105 to 217 (DQSIGLLKRF…GYLSTPPLVK (113 aa)). The chain crosses the membrane as a helical span at residues 124-144 (VLIPVHLVTSSFWFGSFYYAA). Residues 221–274 (QDRMEETKELFTEKMEETRDIISGKMEETKDRISEKLQETKDRVAFRKKKNEEM) are a coiled coil.

It belongs to the FAM210 family.

It is found in the membrane. The protein resides in the mitochondrion. Its subcellular location is the cytoplasm. Its function is as follows. May play a role in the structure and strength of both muscle and bone. The polypeptide is Protein FAM210A (fam210a) (Xenopus tropicalis (Western clawed frog)).